Here is a 445-residue protein sequence, read N- to C-terminus: Putrescine hydroxycinnamoyltransferase 1 (445 aa).

Residues His154 and Asp388 each act as proton acceptor in the active site.

This sequence belongs to the plant acyltransferase family. In terms of tissue distribution, expressed in leaves.

Hydroxycinnamoyl transferase that catalyzes the transfer of an acyl from p-coumaryol-CoA to putrescine, to produce coumaroyl putrescine. This chain is Putrescine hydroxycinnamoyltransferase 1, found in Oryza sativa subsp. japonica (Rice).